We begin with the raw amino-acid sequence, 138 residues long: Small ribosomal subunit protein uS11c (138 aa).

Residues 1 to 24 form a disordered region; that stretch reads MAKAIPRSGSRRSGRIGSRKSTRR. The segment covering 9 to 24 has biased composition (basic residues); sequence GSRRSGRIGSRKSTRR.

The protein belongs to the universal ribosomal protein uS11 family. Part of the 30S ribosomal subunit.

Its subcellular location is the plastid. The protein resides in the chloroplast. In Panax ginseng (Korean ginseng), this protein is Small ribosomal subunit protein uS11c.